Here is a 304-residue protein sequence, read N- to C-terminus: Acetyl-coenzyme A carboxylase carboxyl transferase subunit beta (304 aa).

A CoA carboxyltransferase N-terminal domain is found at 23-292 (VWTKCDSCGQ…PNPEAPREGV (270 aa)). Residues Cys27, Cys30, Cys46, and Cys49 each coordinate Zn(2+). The C4-type zinc finger occupies 27–49 (CDSCGQVLYRAELERNLEVCPKC). Residues 285-304 (PEAPREGVVVPPVPDQEPEA) form a disordered region. Residues 295–304 (PPVPDQEPEA) show a composition bias toward pro residues.

Belongs to the AccD/PCCB family. Acetyl-CoA carboxylase is a heterohexamer composed of biotin carboxyl carrier protein (AccB), biotin carboxylase (AccC) and two subunits each of ACCase subunit alpha (AccA) and ACCase subunit beta (AccD). Requires Zn(2+) as cofactor.

The protein localises to the cytoplasm. The enzyme catalyses N(6)-carboxybiotinyl-L-lysyl-[protein] + acetyl-CoA = N(6)-biotinyl-L-lysyl-[protein] + malonyl-CoA. It functions in the pathway lipid metabolism; malonyl-CoA biosynthesis; malonyl-CoA from acetyl-CoA: step 1/1. Functionally, component of the acetyl coenzyme A carboxylase (ACC) complex. Biotin carboxylase (BC) catalyzes the carboxylation of biotin on its carrier protein (BCCP) and then the CO(2) group is transferred by the transcarboxylase to acetyl-CoA to form malonyl-CoA. This Escherichia coli O6:H1 (strain CFT073 / ATCC 700928 / UPEC) protein is Acetyl-coenzyme A carboxylase carboxyl transferase subunit beta.